The primary structure comprises 66 residues: Large ribosomal subunit protein bL35 (66 aa).

It belongs to the bacterial ribosomal protein bL35 family.

This is Large ribosomal subunit protein bL35 from Lysinibacillus sphaericus (strain C3-41).